Reading from the N-terminus, the 299-residue chain is MKGRSALLRALWIAALSFGLGGVAVAAEPTAKAAPYENLMVPSPSMGRDIPVAFLAGGPHAVYLLDAFNAGPDVSNWVTAGNAMNTLAGKGISVVAPAGGAYSMYTNWEQDGSKQWDTFLSAELPDWLAANRGLAPGGHAAVGAAQGGYGAMALAAFHPDRFGFAGSMSGFLYPSNTTTNGAIAAGMQQFGGVDTNGMWGAPQLGRWKWHDPWVHASLLAQNNTRVWVWSPTNPGASDPAAMIGQAAEAMGNSRMFYNQYRSVGGHNGHFDFPASGDNGWGSWAPQLGAMSGDIVGAIR.

The first 26 residues, 1 to 26 (MKGRSALLRALWIAALSFGLGGVAVA), serve as a signal peptide directing secretion.

It belongs to the mycobacterial A85 antigen family. As to quaternary structure, homodimer.

It is found in the secreted. May have a role in host tissue attachment, whereby ligands may include the serum protein fibronectin and small sugars. In Mycobacterium bovis (strain ATCC BAA-935 / AF2122/97), this protein is MPT51/MPB51 antigen (mpt51).